The primary structure comprises 463 residues: Mitochondrial distribution and morphology protein 10 (463 aa).

The protein belongs to the MDM10 family. As to quaternary structure, component of the ER-mitochondria encounter structure (ERMES) or MDM complex, composed of MMM1, MDM10, MDM12 and MDM34. Associates with the mitochondrial outer membrane sorting assembly machinery SAM(core) complex.

It is found in the mitochondrion outer membrane. Functionally, component of the ERMES/MDM complex, which serves as a molecular tether to connect the endoplasmic reticulum and mitochondria. Components of this complex are involved in the control of mitochondrial shape and protein biogenesis and may function in phospholipid exchange. MDM10 is involved in the late assembly steps of the general translocase of the mitochondrial outer membrane (TOM complex). Functions in the TOM40-specific route of the assembly of outer membrane beta-barrel proteins, including the association of TOM40 with the receptor TOM22 and small TOM proteins. Can associate with the SAM(core) complex as well as the MDM12-MMM1 complex, both involved in late steps of the major beta-barrel assembly pathway, that is responsible for biogenesis of all outer membrane beta-barrel proteins. May act as a switch that shuttles between both complexes and channels precursor proteins into the TOM40-specific pathway. Plays a role in mitochondrial morphology and in the inheritance of mitochondria. The chain is Mitochondrial distribution and morphology protein 10 from Candida dubliniensis (strain CD36 / ATCC MYA-646 / CBS 7987 / NCPF 3949 / NRRL Y-17841) (Yeast).